Consider the following 311-residue polypeptide: MQVFLKATHFDFIGRRKPAIYASLFLIGVSLVSLFTQGLNFGIDFAGGTLIQVRFEKPMDLAPVRQAIAPLDLGDTVVQSFGTPEEVLIRVEKQGADNAAQQAIVSGVLDALKPIAGEHGVEMRRVEYVGPQVGEELTEKGMLAMLYAMVAILIYISFRFELRFALGAVLALVHDVVLTMGFFSVLQKEFTLVVVAALLTVVGYSLNDTIVVYDRIREEMKRMKRQPLATIINEAVNRTLSRTLITSLTTVLVLIALFVLGGAVIHDFALTLLFGVGIGTYSSIFVASPLVLLMDPGSRRKVAAETAEETP.

The next 6 membrane-spanning stretches (helical) occupy residues 19 to 39 (AIYASLFLIGVSLVSLFTQGL), 142 to 162 (MLAMLYAMVAILIYISFRFEL), 166 to 186 (LGAVLALVHDVVLTMGFFSVL), 192 to 212 (LVVVAALLTVVGYSLNDTIVV), 245 to 265 (ITSLTTVLVLIALFVLGGAVI), and 272 to 292 (LLFGVGIGTYSSIFVASPLVL).

Belongs to the SecD/SecF family. SecF subfamily. Forms a complex with SecD. Part of the essential Sec protein translocation apparatus which comprises SecA, SecYEG and auxiliary proteins SecDF-YajC and YidC.

It localises to the cell inner membrane. Part of the Sec protein translocase complex. Interacts with the SecYEG preprotein conducting channel. SecDF uses the proton motive force (PMF) to complete protein translocation after the ATP-dependent function of SecA. This chain is Protein translocase subunit SecF, found in Magnetococcus marinus (strain ATCC BAA-1437 / JCM 17883 / MC-1).